The sequence spans 310 residues: Cytochrome f (310 aa).

An N-terminal signal peptide occupies residues 1 to 27 (MRRILTFFLGSIIIGLSIIISPSSSFA). Heme is bound by residues tyrosine 28, cysteine 48, cysteine 51, and histidine 52. A helical membrane pass occupies residues 277 to 297 (VIGLIAFFAGVALTQILLVLK).

The protein belongs to the cytochrome f family. The 4 large subunits of the cytochrome b6-f complex are cytochrome b6, subunit IV (17 kDa polypeptide, PetD), cytochrome f and the Rieske protein, while the 4 small subunits are PetG, PetL, PetM and PetN. The complex functions as a dimer. Requires heme as cofactor.

The protein localises to the cellular thylakoid membrane. Component of the cytochrome b6-f complex, which mediates electron transfer between photosystem II (PSII) and photosystem I (PSI), cyclic electron flow around PSI, and state transitions. The chain is Cytochrome f from Prochlorococcus marinus (strain SARG / CCMP1375 / SS120).